The following is a 442-amino-acid chain: Probable carboxypeptidase PABG_01461 (442 aa).

The N-terminal stretch at 1–20 is a signal peptide; sequence MKLQYLVALLSVQAVPPVTA. The N-linked (GlcNAc...) asparagine glycan is linked to N102. A Zn(2+)-binding site is contributed by D160. The active-site Proton acceptor is the E192. A Zn(2+)-binding site is contributed by E193. N-linked (GlcNAc...) asparagine glycosylation occurs at N343.

It belongs to the peptidase M20A family. It depends on Zn(2+) as a cofactor.

Its subcellular location is the secreted. The sequence is that of Probable carboxypeptidase PABG_01461 from Paracoccidioides brasiliensis (strain Pb03).